We begin with the raw amino-acid sequence, 255 residues long: DNA repair protein RecO (255 aa).

This sequence belongs to the RecO family.

Functionally, involved in DNA repair and RecF pathway recombination. This Listeria monocytogenes serotype 4b (strain CLIP80459) protein is DNA repair protein RecO.